A 157-amino-acid chain; its full sequence is Crossover junction endodeoxyribonuclease RuvC (157 aa).

Catalysis depends on residues aspartate 9, glutamate 70, and aspartate 142. Positions 9, 70, and 142 each coordinate Mg(2+).

It belongs to the RuvC family. Homodimer which binds Holliday junction (HJ) DNA. The HJ becomes 2-fold symmetrical on binding to RuvC with unstacked arms; it has a different conformation from HJ DNA in complex with RuvA. In the full resolvosome a probable DNA-RuvA(4)-RuvB(12)-RuvC(2) complex forms which resolves the HJ. Requires Mg(2+) as cofactor.

The protein resides in the cytoplasm. The enzyme catalyses Endonucleolytic cleavage at a junction such as a reciprocal single-stranded crossover between two homologous DNA duplexes (Holliday junction).. Its function is as follows. The RuvA-RuvB-RuvC complex processes Holliday junction (HJ) DNA during genetic recombination and DNA repair. Endonuclease that resolves HJ intermediates. Cleaves cruciform DNA by making single-stranded nicks across the HJ at symmetrical positions within the homologous arms, yielding a 5'-phosphate and a 3'-hydroxyl group; requires a central core of homology in the junction. The consensus cleavage sequence is 5'-(A/T)TT(C/G)-3'. Cleavage occurs on the 3'-side of the TT dinucleotide at the point of strand exchange. HJ branch migration catalyzed by RuvA-RuvB allows RuvC to scan DNA until it finds its consensus sequence, where it cleaves and resolves the cruciform DNA. This chain is Crossover junction endodeoxyribonuclease RuvC, found in Cyanothece sp. (strain PCC 7425 / ATCC 29141).